The chain runs to 503 residues: Probable protein kinase UbiB (503 aa).

The chain crosses the membrane as a helical span at residues 13–35 (TFYRYRLAGLCASLMGSGWICAL). Residues 120–491 (EFETEPIASA…QQRQSLWLAV (372 aa)) enclose the Protein kinase domain. ATP-binding positions include 126-134 (IASASIAQV) and Lys-148. The active-site Proton acceptor is Asp-283. The chain crosses the membrane as a helical span at residues 485–502 (QSLWLAVIAVVLLLILLL).

Belongs to the ABC1 family. UbiB subfamily.

Its subcellular location is the cell inner membrane. It participates in cofactor biosynthesis; ubiquinone biosynthesis [regulation]. Its function is as follows. Is probably a protein kinase regulator of UbiI activity which is involved in aerobic coenzyme Q (ubiquinone) biosynthesis. The chain is Probable protein kinase UbiB from Neisseria meningitidis serogroup B (strain ATCC BAA-335 / MC58).